Reading from the N-terminus, the 175-residue chain is Development-specific protein S homolog (175 aa).

2 Beta/gamma crystallin 'Greek key' domains span residues 2 to 46 (ANIT…KVPP) and 48 to 86 (VKAI…KVMS). A connecting peptide region spans residues 87-90 (VPVQ). 2 Beta/gamma crystallin 'Greek key' domains span residues 91 to 135 (PRAR…KPEG) and 136 to 175 (LKVV…RITP).

This sequence belongs to the beta/gamma-crystallin family.

It is found in the spore. Its subcellular location is the perispore. In Myxococcus xanthus, this protein is Development-specific protein S homolog (ops).